The chain runs to 409 residues: Probable glutaryl-CoA dehydrogenase, mitochondrial (409 aa).

110-111 contributes to the substrate binding site; it reads RS. FAD is bound by residues 149 to 152, S158, and 184 to 186; these read FGLT and WIS. S158 contacts substrate. Residues 261-265 and R268 contribute to the substrate site; that span reads FGCLN. E388 serves as the catalytic Proton acceptor. FAD contacts are provided by T390 and F408.

It belongs to the acyl-CoA dehydrogenase family. FAD serves as cofactor.

The protein resides in the mitochondrion matrix. It catalyses the reaction glutaryl-CoA + oxidized [electron-transfer flavoprotein] + 2 H(+) = (2E)-butenoyl-CoA + reduced [electron-transfer flavoprotein] + CO2. It functions in the pathway amino-acid metabolism; lysine degradation. Its pathway is amino-acid metabolism; tryptophan metabolism. In Caenorhabditis elegans, this protein is Probable glutaryl-CoA dehydrogenase, mitochondrial.